The chain runs to 292 residues: Glycine--tRNA ligase alpha subunit (292 aa).

The protein belongs to the class-II aminoacyl-tRNA synthetase family. As to quaternary structure, tetramer of two alpha and two beta subunits.

The protein localises to the cytoplasm. The catalysed reaction is tRNA(Gly) + glycine + ATP = glycyl-tRNA(Gly) + AMP + diphosphate. The protein is Glycine--tRNA ligase alpha subunit of Pelotomaculum thermopropionicum (strain DSM 13744 / JCM 10971 / SI).